The chain runs to 358 residues: Tetraacyldisaccharide 4'-kinase (358 aa).

71–78 is a binding site for ATP; the sequence is IAGGAGKT.

This sequence belongs to the LpxK family.

The catalysed reaction is a lipid A disaccharide + ATP = a lipid IVA + ADP + H(+). The protein operates within glycolipid biosynthesis; lipid IV(A) biosynthesis; lipid IV(A) from (3R)-3-hydroxytetradecanoyl-[acyl-carrier-protein] and UDP-N-acetyl-alpha-D-glucosamine: step 6/6. In terms of biological role, transfers the gamma-phosphate of ATP to the 4'-position of a tetraacyldisaccharide 1-phosphate intermediate (termed DS-1-P) to form tetraacyldisaccharide 1,4'-bis-phosphate (lipid IVA). This chain is Tetraacyldisaccharide 4'-kinase, found in Methylibium petroleiphilum (strain ATCC BAA-1232 / LMG 22953 / PM1).